A 299-amino-acid chain; its full sequence is Regucalcin (299 aa).

Residue glutamate 18 coordinates a divalent metal cation. 3 residues coordinate substrate: arginine 101, asparagine 103, and glutamate 121. An N6-succinyllysine modification is found at lysine 144. A divalent metal cation-binding residues include asparagine 154 and aspartate 204. The active-site Proton donor/acceptor is aspartate 204. Residues lysine 244 and lysine 253 each carry the N6-succinyllysine modification.

This sequence belongs to the SMP-30/CGR1 family. In terms of assembly, monomer. Requires Zn(2+) as cofactor. The cofactor is Mn(2+). It depends on Ca(2+) as a cofactor. Mg(2+) serves as cofactor.

The protein resides in the cytoplasm. It catalyses the reaction D-glucono-1,5-lactone + H2O = D-gluconate + H(+). Its function is as follows. Gluconolactonase with low activity towards other sugar lactones, including gulonolactone and galactonolactone. Can also hydrolyze diisopropyl phosphorofluoridate and phenylacetate (in vitro). Calcium-binding protein. Modulates Ca(2+) signaling, and Ca(2+)-dependent cellular processes and enzyme activities. The chain is Regucalcin (RGN) from Homo sapiens (Human).